Consider the following 426-residue polypeptide: MFDRYDAGEQAVLVHIYFTQDKDMEDLQEFESLVSSAGVEALQVITGSRKAPHPKYFVGEGKAVEIAEAVKATGASVVLFDHALSPAQERNLERLCECRVIDRTGLILDIFAQRARTHEGKLQVELAQLRHLATRLVRGWTHLERQKGGIGLRGPGETQLETDRRLLRNRIVQIQSRLERVEKQREQGRQSRIKADVPTVSLVGYTNAGKSTLFNRITEARVYAADQLFATLDPTLRRIDVADVGETVLADTVGFIRHLPHDLVAAFKATLQETRQATLLLHVIDAADVRVQENIEAVNTVLEEIDAHEIPTLLVMNKIDMLEDFEPRIDRDEENKPNRVWLSAQTGAGIPQLFQALTERLSGEVAQHTLRLPPQEGRLRSRFYQLQAIEKEWMEEDGSVSLQVRMPIVDWRRLCKQEPALIDYLI.

One can recognise a Hflx-type G domain in the interval 198–365 (PTVSLVGYTN…ALTERLSGEV (168 aa)). GTP-binding positions include 204–211 (GYTNAGKS), 229–233 (FATLD), 251–254 (DTVG), 317–320 (NKID), and 343–345 (SAQ). The Mg(2+) site is built by S211 and T231.

It belongs to the TRAFAC class OBG-HflX-like GTPase superfamily. HflX GTPase family. In terms of assembly, monomer. Associates with the 50S ribosomal subunit. This interaction occurs in the presence of GTP, GDP, ATP or ADP, but not in their absence. Mg(2+) serves as cofactor.

It is found in the cytoplasm. With respect to regulation, intrinsic GTPase activity is very slow and can be stimulated by the presence of 50S ribosomal subunits or 70S ribosomes. GTPase activity is inhibited by ATP. Its function is as follows. GTPase that associates with the 50S ribosomal subunit and may have a role during protein synthesis or ribosome biogenesis. In vitro, also exhibits ATPase activity. This chain is GTPase HflX, found in Escherichia coli (strain K12).